The sequence spans 511 residues: Probable eukaryotic translation initiation factor 4H (511 aa).

2 disordered regions span residues 25–63 (SWADDDFDLPTAPAAREESGSGLKRGDPGYFESLPDRGS) and 154–511 (TIRV…EVKI). Basic and acidic residues predominate over residues 39 to 51 (AREESGSGLKRGD). The 77-residue stretch at 86–162 (FTAFIGNLSF…RTIRVNVAEA (77 aa)) folds into the RRM domain. The span at 179-196 (WRRSTPLASRESSSQPSR) shows a compositional bias: polar residues. Basic and acidic residues-rich tracts occupy residues 230 to 247 (VRRDSSGPGHTREPRDPG) and 261 to 270 (LAEKVDRDVP). Residues 285 to 318 (LADTEQTWSRGTKLRTPTTTSRQSSADSTPSSGA) are compositionally biased toward polar residues. Positions 331–349 (TAGSPSATANATPAAPASG) are enriched in low complexity. Ser-334 bears the Phosphoserine mark. 2 stretches are compositionally biased toward basic and acidic residues: residues 360–388 (AAREKAAEEKLAQREGERRKAREEAEKQK) and 394–419 (KPVEGEKLGWREEKLRSIKAAQDKVA). Low complexity predominate over residues 420-434 (GKPTTAPATTTNTGA). The span at 438–448 (GSADRAKKDEQ) shows a compositional bias: basic and acidic residues. Polar residues predominate over residues 451–467 (EQVQPSRKSSQTGATSE). Positions 502-511 (VTKGVEEVKI) are enriched in basic and acidic residues.

Its subcellular location is the cytoplasm. It is found in the P-body. Probable translation initiation factor. The sequence is that of Probable eukaryotic translation initiation factor 4H from Cryptococcus neoformans var. grubii serotype A (strain H99 / ATCC 208821 / CBS 10515 / FGSC 9487) (Filobasidiella neoformans var. grubii).